Reading from the N-terminus, the 359-residue chain is Tropomodulin-1 (359 aa).

Residues 36–61 (ELDPDNALLPAGLRQKDQTTKAPTGP) form a disordered region. The tropomyosin-binding stretch occupies residues 39–138 (PDNALLPAGL…CDIAAILGMH (100 aa)).

It belongs to the tropomodulin family. In terms of assembly, binds to the N-terminus of tropomyosin and to actin. Interacts with FLII. Highly expressed in the erythrocyte, heart and skeletal muscle.

Its subcellular location is the cytoplasm. The protein localises to the cytoskeleton. Its function is as follows. Blocks the elongation and depolymerization of the actin filaments at the pointed end. The Tmod/TM complex contributes to the formation of the short actin protofilament, which in turn defines the geometry of the membrane skeleton. May play an important role in regulating the organization of actin filaments by preferentially binding to a specific tropomyosin isoform at its N-terminus. The chain is Tropomodulin-1 (TMOD1) from Homo sapiens (Human).